Consider the following 382-residue polypeptide: Putative acetyl-CoA C-acetyltransferase VraB (382 aa).

Cys86 (acyl-thioester intermediate) is an active-site residue. His338 serves as the catalytic Proton acceptor.

The protein belongs to the thiolase-like superfamily. Thiolase family.

In Staphylococcus epidermidis (strain ATCC 35984 / DSM 28319 / BCRC 17069 / CCUG 31568 / BM 3577 / RP62A), this protein is Putative acetyl-CoA C-acetyltransferase VraB (vraB).